Reading from the N-terminus, the 32-residue chain is Apolipophorin-3 (32 aa).

Positions 1 to 32 are disordered; it reads DAPSTTPPQDXEKKAAEFQKTFTEQXNQLANK. The span at 20 to 32 shows a compositional bias: polar residues; it reads KTFTEQXNQLANK.

The protein belongs to the insect apolipophorin-3 family. Equilibrium between a soluble monomer and a bound lipoprotein form. Apolipophorin-3 associates with lipophorin during lipid loading until each particle contains 9 or 14 molecules of apolipophorin-3. In terms of tissue distribution, hemolymph.

The protein localises to the secreted. Assists in the loading of diacylglycerol, generated from triacylglycerol stores in the fat body through the action of adipokinetic hormone, into lipophorin, the hemolymph lipoprotein. It increases the lipid carrying capacity of lipophorin by covering the expanding hydrophobic surface resulting from diacylglycerol uptake. It thus plays a critical role in the transport of lipids during flight in several species of insects. In Diatraea grandiosella (Southwestern corn borer), this protein is Apolipophorin-3.